A 316-amino-acid polypeptide reads, in one-letter code: Transaldolase (316 aa).

Catalysis depends on Lys131, which acts as the Schiff-base intermediate with substrate.

Belongs to the transaldolase family. Type 1 subfamily. Homodimer.

It is found in the cytoplasm. It catalyses the reaction D-sedoheptulose 7-phosphate + D-glyceraldehyde 3-phosphate = D-erythrose 4-phosphate + beta-D-fructose 6-phosphate. It participates in carbohydrate degradation; pentose phosphate pathway; D-glyceraldehyde 3-phosphate and beta-D-fructose 6-phosphate from D-ribose 5-phosphate and D-xylulose 5-phosphate (non-oxidative stage): step 2/3. Transaldolase is important for the balance of metabolites in the pentose-phosphate pathway. This Chromohalobacter salexigens (strain ATCC BAA-138 / DSM 3043 / CIP 106854 / NCIMB 13768 / 1H11) protein is Transaldolase.